A 312-amino-acid chain; its full sequence is MIPTFRIQIRRYLNTEVKRRLYAQCLNRDFDSLLAEVKGIPVSEMEESFVTLYLMKSAQFGHVPSLDYLWHKYVMRHHMIMVNPSLLCDIGNIALQEGKLFIPEQLSSHFMKFYGSNNEYEQYRYELLRIQVESFAKGTMEKTSFREKWKVFLQDLDHTVERDFQFSVRDFPHLTQALSGTDRELLLKMLFSEGKISVCNNSSLPMLLNMILLQEEFELEFKIKLFQNFYTIHRHLNYEDTVTILFKNCKGNGYRSIELMEFVRGNKITTPHLAYKYFLQSIIDSEYYFKAYDYMDLVKKYDGLLEQLRQQE.

The transit peptide at 1–12 (MIPTFRIQIRRY) directs the protein to the mitochondrion.

Its subcellular location is the mitochondrion inner membrane. Functionally, required for expression of the mitochondrial gene for cytochrome c oxidase subunit 3 (COX3). PET122 seems to work by directly interacting with the small ribosomal subunit to promote translation initiation on the COX3 mRNA. The polypeptide is Protein PET122, mitochondrial (PET122) (Lachancea kluyveri (strain ATCC 58438 / CBS 3082 / BCRC 21498 / NBRC 1685 / JCM 7257 / NCYC 543 / NRRL Y-12651) (Yeast)).